The primary structure comprises 300 residues: 2-oxoglutarate-dependent dioxygenase DAO (300 aa).

The 104-residue stretch at 149–252 folds into the Fe2OG dioxygenase domain; it reads WPCQFRMNRY…VSIAMFLLAP (104 aa). Residues H173, D175, and H232 each contribute to the Fe cation site. R242 contributes to the 2-oxoglutarate binding site.

This sequence belongs to the iron/ascorbate-dependent oxidoreductase family. Fe(2+) is required as a cofactor.

Its function is as follows. 2-oxoglutarate-dependent dioxygenase essential for auxin catabolism and maintenance of auxin homeostasis in reproductive organs. Catalyzes the irreversible oxidation of indole-3-acetic acid (IAA) to the biologically inactive 2-oxoindole-3-acetic acid (OxIAA). This is 2-oxoglutarate-dependent dioxygenase DAO (DAO) from Oryza sativa subsp. indica (Rice).